Consider the following 351-residue polypeptide: AT-hook motif nuclear-localized protein 10 (351 aa).

The disordered stretch occupies residues 1–151; the sequence is MSGSETGLMA…RPPGSSSKRL (151 aa). A compositionally biased stretch (low complexity) spans 23–37; the sequence is HQQQQHSQAQPQQSQ. Over residues 60–77 the composition is skewed to polar residues; the sequence is SPPQQYQPNSAGENSVLN. The Bipartite nuclear localization signal signature appears at 97 to 105; that stretch reads KKRRGRPRK. DNA-binding regions (a.T hook) lie at residues 97 to 109 and 138 to 149; these read KKRR…YGPD and KKRGRPPGSSSK. Positions 159 to 301 constitute a PPC domain; sequence TGIGFTPHVL…QMGLSSPVLP (143 aa). 2 stretches are compositionally biased toward polar residues: residues 310 to 325 and 334 to 351; these read MTPS…SESS and IHQS…MPWK. The interval 310 to 351 is disordered; it reads MTPSSPQSRGTMSESSCGGGHGSPIHQSTGGPYNNTINMPWK.

It is found in the nucleus. Transcription factor that specifically binds AT-rich DNA sequences related to the nuclear matrix attachment regions (MARs). This Arabidopsis thaliana (Mouse-ear cress) protein is AT-hook motif nuclear-localized protein 10.